The primary structure comprises 872 residues: Homeobox-leucine zipper protein ROC6 (872 aa).

2 disordered regions span residues 28-53 (VHNS…GLSL) and 67-130 (NRSL…HRHT). Residues 74-85 (GNGGSGSGGDGD) show a composition bias toward gly residues. Over residues 86–99 (SLGRGREEENDSRS) the composition is skewed to basic and acidic residues. Residues 119–130 (PRKKKKRYHRHT) show a composition bias toward basic residues. Positions 122 to 181 (KKKRYHRHTPQQIQELEAVFKECPHPDEKQRMELSRRLNLESRQVKFWFQNRRTQMKQTQ) form a DNA-binding region, homeobox. A coiled-coil region spans residues 176 to 248 (QMKQTQIERH…LKDELDRVCA (73 aa)). Residues 340–583 (GAIDRAVLLE…LQRQCQYLAI (244 aa)) enclose the START domain. The interval 792 to 818 (HNNGASPSPAEVGSGASPNSAAGGGGG) is disordered.

It belongs to the HD-ZIP homeobox family. Class IV subfamily.

The protein localises to the nucleus. In terms of biological role, probable transcription factor. The chain is Homeobox-leucine zipper protein ROC6 (ROC6) from Oryza sativa subsp. japonica (Rice).